A 291-amino-acid polypeptide reads, in one-letter code: Transmembrane protein 41B (291 aa).

Residues 1 to 11 (MAKGRVAERSQ) are compositionally biased toward basic and acidic residues. Positions 1–38 (MAKGRVAERSQTEMLHSTPAGDRAVGTQGSAAPGNKDH) are disordered. Threonine 18 carries the phosphothreonine modification. A run of 6 helical transmembrane segments spans residues 52–72 (TSLLILVSIFSCAAFVMFLVY), 109–129 (FYVQVLVAYFATYIFLQTFAI), 147–169 (LALFLVCLCSGLGASFCYMLSYL), 197–217 (LINYIIFLRITPFLPNWFINI), 225–245 (PLKVFFIGTFLGVAPPSFVAI), and 262–282 (SWNSVFILMILALLSILPAIF). Residues 140 to 251 (GFLYPFPLAL…FVAIKAGTTL (112 aa)) form a VTT domain; required for its function in autophagy region.

Belongs to the TMEM41 family. Interacts with VMP1. Interacts with COPA, COPB1, VDAC1 and ERLIN2. Interacts with ATG2A. Interacts with SURF4.

It is found in the endoplasmic reticulum membrane. Its subcellular location is the endomembrane system. It carries out the reaction a 1,2-diacyl-sn-glycero-3-phospho-L-serine(in) = a 1,2-diacyl-sn-glycero-3-phospho-L-serine(out). It catalyses the reaction cholesterol(in) = cholesterol(out). The enzyme catalyses a 1,2-diacyl-sn-glycero-3-phosphocholine(in) = a 1,2-diacyl-sn-glycero-3-phosphocholine(out). The catalysed reaction is a 1,2-diacyl-sn-glycero-3-phosphoethanolamine(in) = a 1,2-diacyl-sn-glycero-3-phosphoethanolamine(out). In terms of biological role, phospholipid scramblase involved in lipid homeostasis and membrane dynamics processes. Has phospholipid scramblase activity toward cholesterol and phosphatidylserine, as well as phosphatidylethanolamine and phosphatidylcholine. Required for autophagosome formation: participates in early stages of autophagosome biogenesis at the endoplasmic reticulum (ER) membrane by reequilibrating the leaflets of the ER as lipids are extracted by ATG2 (ATG2A or ATG2B) to mediate autophagosome assembly. In addition to autophagy, involved in other processes in which phospholipid scramblase activity is required. Required for normal motor neuron development. This Rattus norvegicus (Rat) protein is Transmembrane protein 41B.